The sequence spans 79 residues: MSSGGLLLLLGLLTLWEVLTPVSSKDRPKFYELPADIGPCEDFTGAFHYSPREHECIEFIYGGCEGNANNFNTLEECET.

A signal peptide spans 1–24; it reads MSSGGLLLLLGLLTLWEVLTPVSS. Residues 31 to 79 enclose the BPTI/Kunitz inhibitor domain; the sequence is YELPADIGPCEDFTGAFHYSPREHECIEFIYGGCEGNANNFNTLEECET. Disulfide bonds link cysteine 40–cysteine 64 and cysteine 56–cysteine 77.

Belongs to the venom Kunitz-type family. In terms of tissue distribution, expressed by the venom gland.

It localises to the secreted. Serine protease inhibitor. This is Kunitz-type serine protease inhibitor microlepidin-5 from Oxyuranus microlepidotus (Inland taipan).